We begin with the raw amino-acid sequence, 460 residues long: NADH-ubiquinone oxidoreductase chain 4 (460 aa).

The next 12 membrane-spanning stretches (helical) occupy residues 20 to 42 (PKWL…LTWL), 61 to 81 (PLST…VLAS), 93 to 113 (QRLY…AFGA), 114 to 134 (TEII…LIII), 148 to 168 (TYFL…LLLL), 195 to 215 (IWWA…GVHL), 225 to 245 (PVAG…YGMM), 258 to 278 (LAYP…SICL), 285 to 304 (SLIA…GILI), 309 to 331 (GFTG…FCLA), 351 to 371 (MIFP…LALP), and 394 to 414 (IILT…LFLM).

This sequence belongs to the complex I subunit 4 family.

It is found in the mitochondrion membrane. It catalyses the reaction a ubiquinone + NADH + 5 H(+)(in) = a ubiquinol + NAD(+) + 4 H(+)(out). Functionally, core subunit of the mitochondrial membrane respiratory chain NADH dehydrogenase (Complex I) that is believed to belong to the minimal assembly required for catalysis. Complex I functions in the transfer of electrons from NADH to the respiratory chain. The immediate electron acceptor for the enzyme is believed to be ubiquinone. In Formosania lacustris (Oriental stream loach), this protein is NADH-ubiquinone oxidoreductase chain 4 (MT-ND4).